Reading from the N-terminus, the 700-residue chain is Polyribonucleotide nucleotidyltransferase (700 aa).

Residues D484 and D490 each contribute to the Mg(2+) site. Residues 551–610 form the KH domain; sequence PRVIRMVVDPEKIREIIGPGGKTISKIIAETGVKIDIEEDGRLYITASDLRSGERAKQMI. The S1 motif domain maps to 620–688; it reads GEIYLGKVLR…KLGRISLSRK (69 aa).

It belongs to the polyribonucleotide nucleotidyltransferase family. Requires Mg(2+) as cofactor.

It localises to the cytoplasm. The enzyme catalyses RNA(n+1) + phosphate = RNA(n) + a ribonucleoside 5'-diphosphate. Its function is as follows. Involved in mRNA degradation. Catalyzes the phosphorolysis of single-stranded polyribonucleotides processively in the 3'- to 5'-direction. In Thermoanaerobacter sp. (strain X514), this protein is Polyribonucleotide nucleotidyltransferase.